The chain runs to 299 residues: Putative glycylpeptide N-tetradecanoyltransferase (299 aa).

Belongs to the NMT family.

The catalysed reaction is N-terminal glycyl-[protein] + tetradecanoyl-CoA = N-tetradecanoylglycyl-[protein] + CoA + H(+). Its function is as follows. Adds a myristoyl group to the N-terminal glycine residue of certain proteins. This chain is Putative glycylpeptide N-tetradecanoyltransferase, found in Amsacta moorei entomopoxvirus (AmEPV).